Consider the following 101-residue polypeptide: MATNHLVLSGTITRSRSFHSPSGIAHSVIMLEHKSQCYEAEMLRNVYCQMQVILSGERFESVTDKLKIGVDIEVQGFIALQQSRNGQNRLVLHAENVELKT.

In terms of domain architecture, SSB spans 1-101 (MATNHLVLSG…LHAENVELKT (101 aa)).

This sequence belongs to the PriB family. As to quaternary structure, homodimer. Interacts with PriA and DnaT. Component of the replication restart primosome. Primosome assembly occurs via a 'hand-off' mechanism. PriA binds to replication forks, subsequently PriB then DnaT bind; DnaT then displaces ssDNA to generate the helicase loading substrate.

Involved in the restart of stalled replication forks, which reloads the replicative helicase on sites other than the origin of replication; the PriA-PriB pathway is the major replication restart pathway. During primosome assembly it facilitates complex formation between PriA and DnaT on DNA; stabilizes PriA on DNA. Stimulates the DNA unwinding activity of PriA helicase. In Shewanella woodyi (strain ATCC 51908 / MS32), this protein is Replication restart protein PriB.